We begin with the raw amino-acid sequence, 550 residues long: Methionine--tRNA ligase (550 aa).

The short motif at 10-22 (LPYPNNSSPHLGN) is the 'HIGH' region element. The 'KMSKS' region motif lies at 336–340 (KFSKS). Lysine 339 contacts ATP.

It belongs to the class-I aminoacyl-tRNA synthetase family.

The catalysed reaction is tRNA(Met) + L-methionine + ATP = L-methionyl-tRNA(Met) + AMP + diphosphate. The protein is Methionine--tRNA ligase (MARS) of Acanthamoeba polyphaga mimivirus (APMV).